Here is a 77-residue protein sequence, read N- to C-terminus: uncharacterized protein (77 aa).

4Fe-4S ferredoxin-type domains follow at residues 3–32 (VEIIVDREKCIGCGRCYDVCPKGPLIWTKD) and 36–65 (KYYAYDVEYCHNCKFCAGRCPTNAILIKVV). [4Fe-4S] cluster contacts are provided by C12, C15, C18, C22, C45, C48, C51, and C55.

Requires [4Fe-4S] cluster as cofactor.

Ferredoxins are iron-sulfur proteins that transfer electrons probably in the CO-dehydrogenase complex. This is an uncharacterized protein from Methanocaldococcus jannaschii (strain ATCC 43067 / DSM 2661 / JAL-1 / JCM 10045 / NBRC 100440) (Methanococcus jannaschii).